Here is a 692-residue protein sequence, read N- to C-terminus: Elongation factor G (692 aa).

Residues 8 to 282 form the tr-type G domain; it reads EKVRNIGIAA…AVVDYLPAPT (275 aa). Residues 17–24, 81–85, and 135–138 contribute to the GTP site; these read AHIDAGKT, DTPGH, and NKMD.

Belongs to the TRAFAC class translation factor GTPase superfamily. Classic translation factor GTPase family. EF-G/EF-2 subfamily.

Its subcellular location is the cytoplasm. Its function is as follows. Catalyzes the GTP-dependent ribosomal translocation step during translation elongation. During this step, the ribosome changes from the pre-translocational (PRE) to the post-translocational (POST) state as the newly formed A-site-bound peptidyl-tRNA and P-site-bound deacylated tRNA move to the P and E sites, respectively. Catalyzes the coordinated movement of the two tRNA molecules, the mRNA and conformational changes in the ribosome. In Trichormus variabilis (strain ATCC 29413 / PCC 7937) (Anabaena variabilis), this protein is Elongation factor G.